The primary structure comprises 679 residues: Mitotic interactor and substrate of PLK1 (679 aa).

Position 78 is a phosphoserine; by CDK1; in vitro (Ser78). 2 disordered regions span residues 151–182 (AVRKSSTVATLQGTPDHGDPRTPGPPRSTPLE) and 206–245 (ANKGAPHSSPARGTPAGTTPGASQAPKAFNKPHLANGHVV). Residues 153 to 163 (RKSSTVATLQG) are compositionally biased toward polar residues. Ser156 is modified (phosphoserine). Phosphothreonine; by CDK1; in vitro occurs at positions 164 and 172. Residue Thr179 is modified to Phosphothreonine. Ser214 carries the phosphoserine; by CDK1; in vitro modification. Phosphothreonine is present on Thr219. Position 224 is a phosphothreonine; by CDK1; in vitro (Thr224). Ser284 bears the Phosphoserine; by CDK1; in vitro mark. Thr287 is subject to Phosphothreonine; by CDK1; in vitro. Ser348 is subject to Phosphoserine. Residues 360 to 371 (QREEDHRREGLH) show a composition bias toward basic and acidic residues. The disordered stretch occupies residues 360 to 419 (QREEDHRREGLHVGRASTPDWVSEGPQPGLRRALSSDSILSPAPDARAADPAPEVRKVNR). Thr377 is modified (phosphothreonine; by CDK1; in vitro). Position 382 is a phosphoserine; by CDK1; in vitro (Ser382). Ser394, Ser395, and Ser397 each carry phosphoserine; by PLK1; in vitro. Ser400 is subject to Phosphoserine. The span at 401–411 (PAPDARAADPA) shows a compositional bias: low complexity. Phosphoserine is present on Ser430. The disordered stretch occupies residues 447–494 (PSSLSTAEAKAATSPKATMSPRHLSESSGKPLSTKQEASKPPRGCPQA). Ser471 carries the phosphoserine; by PLK1; in vitro modification. Positions 472-482 (ESSGKPLSTKQ) are enriched in polar residues. Phosphoserine occurs at positions 541 and 543. Positions 545 to 569 (DLLERERESVLRREQEVAEERRNAL) form a coiled coil. Basic and acidic residues predominate over residues 557-567 (REQEVAEERRN). Disordered stretches follow at residues 557 to 598 (REQE…ITGS) and 622 to 643 (DPVDSAPPGQRKKEQWYAGINP). Position 575 is a phosphoserine; by CDK1; in vitro (Ser575). Thr577 is modified (phosphothreonine). 2 positions are modified to phosphoserine; by PLK1; in vitro: Ser582 and Ser586. The segment covering 583–593 (DQNSRSSSQAS) has biased composition (low complexity). Ser675 bears the Phosphoserine mark.

It belongs to the MISP family. As to quaternary structure, associates with F-actin. Interacts with DCTN1; this interaction regulates DCTN1 distribution at the cell cortex. Interacts with PTK2/FAK and MAPRE1. Post-translationally, phosphorylated by CDK1 and PLK1. CDK1 is the priming kinase for PLK1 phosphorylation. Phosphorylation by PLK1 is required for proper spindle orientation at metaphase.

The protein localises to the cell junction. Its subcellular location is the focal adhesion. It localises to the cytoplasm. It is found in the cytoskeleton. The protein resides in the cell cortex. Plays a role in mitotic spindle orientation and mitotic progression. Regulates the distribution of dynactin at the cell cortex in a PLK1-dependent manner, thus stabilizing cortical and astral microtubule attachments required for proper mitotic spindle positioning. May link microtubules to the actin cytospkeleton and focal adhesions. May be required for directed cell migration and centrosome orientation. May also be necessary for proper stacking of the Golgi apparatus. The chain is Mitotic interactor and substrate of PLK1 from Homo sapiens (Human).